Reading from the N-terminus, the 487-residue chain is L-carnitine dehydrogenase/betainyl-CoA thioesterase (487 aa).

An L-carnitine dehydrogenase region spans residues 1-327 (MTTAAIIGGG…DAALKPKALP (327 aa)). 8-13 (GGGVIG) serves as a coordination point for NAD(+). The segment at 328-487 (DLDTADLTQP…GAGSAIRKPA (160 aa)) is betainyl-CoA thioesterase.

It in the N-terminal section; belongs to the 3-hydroxyacyl-CoA dehydrogenase family. L-carnitine dehydrogenase subfamily. This sequence in the C-terminal section; belongs to the betainyl-CoA thioesterase family. In terms of assembly, homodimer.

It localises to the cytoplasm. It carries out the reaction carnitine + NAD(+) = 3-dehydrocarnitine + NADH + H(+). It catalyses the reaction N,N,N-trimethylglycyl-CoA + H2O = glycine betaine + CoA + H(+). It functions in the pathway amine and polyamine metabolism; carnitine metabolism. Its function is as follows. Multifunctional enzyme that catalyzes the NAD(+)-dependent oxidation of L-carnitine to 3-dehydrocarnitine and the cleavage of betainyl-CoA (N,N,N-trimethylglycyl-CoA) into glycine betaine and coenzyme A. The chain is L-carnitine dehydrogenase/betainyl-CoA thioesterase from Ruegeria pomeroyi (strain ATCC 700808 / DSM 15171 / DSS-3) (Silicibacter pomeroyi).